A 134-amino-acid chain; its full sequence is Profilin-3 (134 aa).

A disulfide bond links Cys13 and Cys118. The Involved in PIP2 interaction signature appears at 84 to 100; the sequence is AVIRGKKGSGGITIKKT. A Phosphothreonine modification is found at Thr114.

It belongs to the profilin family. In terms of assembly, occurs in many kinds of cells as a complex with monomeric actin in a 1:1 ratio. In terms of processing, phosphorylated by MAP kinases.

The protein localises to the cytoplasm. It localises to the cytoskeleton. Binds to actin and affects the structure of the cytoskeleton. At high concentrations, profilin prevents the polymerization of actin, whereas it enhances it at low concentrations. This is Profilin-3 from Olea europaea (Common olive).